A 3333-amino-acid chain; its full sequence is Laminin subunit alpha-3 (3333 aa).

Residues 1 to 35 form the signal peptide; sequence MAAAARPRGRALGPVLPPTPLLLLVLRVLPACGAT. A Laminin N-terminal domain is found at 43-298; sequence AGLSLHPTYF…SIKDISIGGQ (256 aa). N-linked (GlcNAc...) asparagine glycosylation is found at asparagine 142 and asparagine 242. Residues 298-728 are domain V; sequence QCVCNGHAEV…NNYYFPDLHH (431 aa). Disulfide bonds link cysteine 299–cysteine 308, cysteine 301–cysteine 319, cysteine 321–cysteine 330, cysteine 333–cysteine 353, cysteine 356–cysteine 365, cysteine 358–cysteine 390, cysteine 393–cysteine 402, cysteine 405–cysteine 423, cysteine 426–cysteine 436, cysteine 428–cysteine 443, cysteine 445–cysteine 454, cysteine 457–cysteine 467, cysteine 491–cysteine 503, cysteine 493–cysteine 509, cysteine 511–cysteine 520, cysteine 523–cysteine 533, cysteine 536–cysteine 548, cysteine 538–cysteine 555, cysteine 557–cysteine 566, cysteine 569–cysteine 586, cysteine 601–cysteine 610, cysteine 613–cysteine 628, cysteine 631–cysteine 645, cysteine 633–cysteine 652, cysteine 654–cysteine 663, cysteine 666–cysteine 681, cysteine 684–cysteine 696, cysteine 686–cysteine 703, and cysteine 705–cysteine 714. Laminin EGF-like domains are found at residues 299 to 355, 356 to 425, 426 to 469, 491 to 535, 536 to 588, 590 to 630, 631 to 683, and 684 to 728; these read CVCN…ECEA, CNCH…GCIP, CSCD…FCLR, CDCN…ICQA, CWCS…ACDP, GTIN…GCSE, CKCH…GCQG, and CQCD…DLHH. Positions 796-1265 are domain IV 1 (domain IV B); the sequence is TEAVSGHITI…VAFYHKGALP (470 aa). 16 cysteine pairs are disulfide-bonded: cysteine 1266/cysteine 1278, cysteine 1268/cysteine 1285, cysteine 1287/cysteine 1296, cysteine 1299/cysteine 1309, cysteine 1312/cysteine 1319, cysteine 1314/cysteine 1326, cysteine 1328/cysteine 1337, cysteine 1340/cysteine 1353, cysteine 1356/cysteine 1371, cysteine 1358/cysteine 1378, cysteine 1380/cysteine 1389, cysteine 1392/cysteine 1402, cysteine 1405/cysteine 1417, cysteine 1407/cysteine 1424, cysteine 1426/cysteine 1435, and cysteine 1438/cysteine 1453. Laminin EGF-like domains are found at residues 1266 to 1311, 1312 to 1355, 1356 to 1404, and 1405 to 1455; these read CECH…RCKP, CSCG…GCEG, CNCS…ECVP, and CNCN…GCTS. Residues 1266 to 1465 are domain III B; it reads CECHPTGATG…CFCFGVNNQC (200 aa). Positions 1476-1653 constitute a Laminin IV type A domain; sequence VDMLGWHLET…SGRIALAVEI (178 aa). Residues 1654 to 1821 form a domain III A region; it reads CACPPAYAGD…DSSPAEECDD (168 aa). 8 disulfide bridges follow: cysteine 1687/cysteine 1696, cysteine 1689/cysteine 1703, cysteine 1706/cysteine 1715, cysteine 1718/cysteine 1731, cysteine 1734/cysteine 1746, cysteine 1736/cysteine 1755, cysteine 1757/cysteine 1766, and cysteine 1769/cysteine 1784. 2 consecutive Laminin EGF-like domains span residues 1687–1733 and 1734–1786; these read CNCN…SCRA and CPCP…SCQP. The region spanning 1787 to 1821 is the Laminin EGF-like 15; truncated domain; the sequence is CSCNSNGQLGSCHPLTGDCINQEPKDSSPAEECDD. The interval 1822–2389 is domain II and I; the sequence is CDSCVMTLLN…ARDAASKVAV (568 aa). Coiled-coil stretches lie at residues 1852-1941 and 1987-2169; these read ASAG…KNVI and KHLR…DELV. Positions 2278–2280 match the Cell attachment site motif; it reads RGD. Positions 2322 to 2388 form a coiled coil; the sequence is RTQNEDFKKA…QARDAASKVA (67 aa). Residues asparagine 2365, asparagine 2502, and asparagine 2584 are each glycosylated (N-linked (GlcNAc...) asparagine). 5 Laminin G-like domains span residues 2390–2591, 2598–2760, 2767–2927, 2986–3150, and 3157–3330; these read PMRF…VEPC, SDKN…TKKC, VRSA…LGGC, ALQF…VSSC, and KGIY…LNGC. 5 disulfide bridges follow: cysteine 2561–cysteine 2591, cysteine 2737–cysteine 2760, cysteine 2895–cysteine 2927, cysteine 3127–cysteine 3150, and cysteine 3302–cysteine 3330.

In terms of assembly, laminin is a complex glycoprotein, consisting of three different polypeptide chains (alpha, beta, gamma), which are bound to each other by disulfide bonds into a cross-shaped molecule comprising one long and three short arms with globules at each end. Alpha-3 is a subunit of laminin-5 (laminin-332 or epiligrin/kalinin/nicein), laminin-6 (laminin-311 or K-laminin) and laminin-7 (laminin-321 or KS-laminin). As to expression, skin; respiratory, urinary, and digestive epithelia and in other specialized tissues with prominent secretory or protective functions. Epithelial basement membrane, and epithelial cell tongue that migrates into a wound bed. A differential and focal expression of the subunit alpha-3 is observed in the CNS.

The protein localises to the secreted. It is found in the extracellular space. Its subcellular location is the extracellular matrix. It localises to the basement membrane. Binding to cells via a high affinity receptor, laminin is thought to mediate the attachment, migration and organization of cells into tissues during embryonic development by interacting with other extracellular matrix components. Functionally, laminin-5 is thought to be involved in (1) cell adhesion via integrin alpha-3/beta-1 in focal adhesion and integrin alpha-6/beta-4 in hemidesmosomes, (2) signal transduction via tyrosine phosphorylation of pp125-FAK and p80, (3) differentiation of keratinocytes. This Homo sapiens (Human) protein is Laminin subunit alpha-3 (LAMA3).